The primary structure comprises 135 residues: Large ribosomal subunit protein uL16c (135 aa).

Residues 1–17 (MLSPKRTRFRKQHRGRM) show a composition bias toward basic residues. The interval 1–21 (MLSPKRTRFRKQHRGRMKGVS) is disordered.

Belongs to the universal ribosomal protein uL16 family. In terms of assembly, part of the 50S ribosomal subunit.

The protein resides in the plastid. Its subcellular location is the chloroplast. The chain is Large ribosomal subunit protein uL16c from Amborella trichopoda.